The following is a 210-amino-acid chain: 3-demethoxyubiquinol 3-hydroxylase (210 aa).

Fe cation-binding residues include E59, E89, H92, E141, E173, and H176.

This sequence belongs to the COQ7 family. Requires Fe cation as cofactor.

The protein localises to the cell membrane. The catalysed reaction is a 5-methoxy-2-methyl-3-(all-trans-polyprenyl)benzene-1,4-diol + AH2 + O2 = a 3-demethylubiquinol + A + H2O. It functions in the pathway cofactor biosynthesis; ubiquinone biosynthesis. In terms of biological role, catalyzes the hydroxylation of 2-nonaprenyl-3-methyl-6-methoxy-1,4-benzoquinol during ubiquinone biosynthesis. The polypeptide is 3-demethoxyubiquinol 3-hydroxylase (Albidiferax ferrireducens (strain ATCC BAA-621 / DSM 15236 / T118) (Rhodoferax ferrireducens)).